The chain runs to 603 residues: Serine protease 56 (603 aa).

Residues 1–19 (MLLAVLLLLPLPSSWFAHG) form the signal peptide. The tract at residues 64–96 (SHECRGSGRPRPQALLQDPPEPGPCGERRPSTA) is disordered. A glycan (N-linked (GlcNAc...) asparagine) is linked at asparagine 97. One can recognise a Peptidase S1 domain in the interval 105–337 (IVGGSAAPPG…FKDWLQEQMS (233 aa)). Cysteine 130 and cysteine 146 form a disulfide bridge. Active-site charge relay system residues include histidine 145 and aspartate 191. Cystine bridges form between cysteine 225–cysteine 292, cysteine 256–cysteine 271, and cysteine 282–cysteine 313. Serine 286 acts as the Charge relay system in catalysis. 2 disordered regions span residues 442–474 (PARELRLHSGSRAAGTRFPKRRPEPRGEANGCP) and 573–603 (EGPWMDVGQGPGLERKGHHPLNPQVPPARQP).

This sequence belongs to the peptidase S1 family. Expressed neural retina, cornea, sclera and optic nerve.

Its function is as follows. Serine protease required during eye development. This Homo sapiens (Human) protein is Serine protease 56 (PRSS56).